Reading from the N-terminus, the 381-residue chain is UDP-4-amino-4-deoxy-L-arabinose--oxoglutarate aminotransferase (381 aa).

N6-(pyridoxal phosphate)lysine is present on lysine 182.

Belongs to the DegT/DnrJ/EryC1 family. ArnB subfamily. Homodimer. Requires pyridoxal 5'-phosphate as cofactor.

The enzyme catalyses UDP-4-amino-4-deoxy-beta-L-arabinose + 2-oxoglutarate = UDP-beta-L-threo-pentopyranos-4-ulose + L-glutamate. It participates in nucleotide-sugar biosynthesis; UDP-4-deoxy-4-formamido-beta-L-arabinose biosynthesis; UDP-4-deoxy-4-formamido-beta-L-arabinose from UDP-alpha-D-glucuronate: step 2/3. The protein operates within bacterial outer membrane biogenesis; lipopolysaccharide biosynthesis. In terms of biological role, catalyzes the conversion of UDP-4-keto-arabinose (UDP-Ara4O) to UDP-4-amino-4-deoxy-L-arabinose (UDP-L-Ara4N). The modified arabinose is attached to lipid A and is required for resistance to polymyxin and cationic antimicrobial peptides. In Proteus mirabilis (strain HI4320), this protein is UDP-4-amino-4-deoxy-L-arabinose--oxoglutarate aminotransferase.